The chain runs to 180 residues: UPF0134 protein MPN_368 (180 aa).

Belongs to the UPF0134 family.

This Mycoplasma pneumoniae (strain ATCC 29342 / M129 / Subtype 1) (Mycoplasmoides pneumoniae) protein is UPF0134 protein MPN_368.